A 424-amino-acid chain; its full sequence is MSLIEDARRGVVTEEMRIVAAAEGVTEDFVRRGVAEGHIVIPVSPYRRVKICGIGEGLRTKVNASIGTSTDMVDVDMEVEKVRQAERAGADTLMELSTGGDFLEIRRRVVEATTLSVGSVPLYQAFIEAARKRGAVVHMEPDDLFRITAEQAKLGTNFMAIHTGINYETMKRLQNQGRHGGLVSRGGAFMTAWMLHNEKENPLYSEFDYLLEILKEHEVTLSFGNGMRAGAVHDATDRAQVQELLINAELADKAHEQGVQTIIEGPGHIPVDEIQTNVVLQKRVTNRRPFYMLGPLVTDIAPGYDDRVAAIGAALSSSYGADFICYVTPAEHLALPTPEEVYEGVMSSRIAAHVGDMIKLKKRDADLEMGHARRDLDWERQFAVAMNPERARAIRDERMPADTDGCTMCGDYCALKIVGRHFNF.

Residues methionine 94, tyrosine 123, histidine 162, 184-186 (SRG), 225-228 (NGMR), and glutamate 264 contribute to the substrate site. Position 268 (histidine 268) interacts with Zn(2+). Tyrosine 291 serves as a coordination point for substrate. Residue histidine 332 participates in Zn(2+) binding. [4Fe-4S] cluster is bound by residues cysteine 406, cysteine 409, and cysteine 413.

Belongs to the ThiC family. The cofactor is [4Fe-4S] cluster.

The enzyme catalyses 5-amino-1-(5-phospho-beta-D-ribosyl)imidazole + S-adenosyl-L-methionine = 4-amino-2-methyl-5-(phosphooxymethyl)pyrimidine + CO + 5'-deoxyadenosine + formate + L-methionine + 3 H(+). The protein operates within cofactor biosynthesis; thiamine diphosphate biosynthesis. Functionally, catalyzes the synthesis of the hydroxymethylpyrimidine phosphate (HMP-P) moiety of thiamine from aminoimidazole ribotide (AIR) in a radical S-adenosyl-L-methionine (SAM)-dependent reaction. The polypeptide is Phosphomethylpyrimidine synthase (Methanoculleus marisnigri (strain ATCC 35101 / DSM 1498 / JR1)).